We begin with the raw amino-acid sequence, 316 residues long: Ferrochelatase (316 aa).

H190 and E271 together coordinate Fe cation.

The protein belongs to the ferrochelatase family.

Its subcellular location is the cytoplasm. The enzyme catalyses heme b + 2 H(+) = protoporphyrin IX + Fe(2+). It participates in porphyrin-containing compound metabolism; protoheme biosynthesis; protoheme from protoporphyrin-IX: step 1/1. In terms of biological role, catalyzes the ferrous insertion into protoporphyrin IX. The chain is Ferrochelatase from Sulfurimonas denitrificans (strain ATCC 33889 / DSM 1251) (Thiomicrospira denitrificans (strain ATCC 33889 / DSM 1251)).